Reading from the N-terminus, the 304-residue chain is Phosphoribosylaminoimidazole-succinocarboxamide synthase (304 aa).

It belongs to the SAICAR synthetase family.

It carries out the reaction 5-amino-1-(5-phospho-D-ribosyl)imidazole-4-carboxylate + L-aspartate + ATP = (2S)-2-[5-amino-1-(5-phospho-beta-D-ribosyl)imidazole-4-carboxamido]succinate + ADP + phosphate + 2 H(+). Its pathway is purine metabolism; IMP biosynthesis via de novo pathway; 5-amino-1-(5-phospho-D-ribosyl)imidazole-4-carboxamide from 5-amino-1-(5-phospho-D-ribosyl)imidazole-4-carboxylate: step 1/2. The sequence is that of Phosphoribosylaminoimidazole-succinocarboxamide synthase from Streptomyces griseus subsp. griseus (strain JCM 4626 / CBS 651.72 / NBRC 13350 / KCC S-0626 / ISP 5235).